A 238-amino-acid chain; its full sequence is Sugar fermentation stimulation protein homolog (238 aa).

It belongs to the SfsA family.

The sequence is that of Sugar fermentation stimulation protein homolog from Histophilus somni (strain 129Pt) (Haemophilus somnus).